The following is a 237-amino-acid chain: Methylthioribulose-1-phosphate dehydratase (237 aa).

C97 is a substrate binding site. Positions 114 and 116 each coordinate Zn(2+). The active-site Proton donor/acceptor is E143. A Zn(2+)-binding site is contributed by H199.

Belongs to the aldolase class II family. MtnB subfamily. Requires Zn(2+) as cofactor.

The protein resides in the cytoplasm. It carries out the reaction 5-(methylsulfanyl)-D-ribulose 1-phosphate = 5-methylsulfanyl-2,3-dioxopentyl phosphate + H2O. The protein operates within amino-acid biosynthesis; L-methionine biosynthesis via salvage pathway; L-methionine from S-methyl-5-thio-alpha-D-ribose 1-phosphate: step 2/6. Functionally, catalyzes the dehydration of methylthioribulose-1-phosphate (MTRu-1-P) into 2,3-diketo-5-methylthiopentyl-1-phosphate (DK-MTP-1-P). The chain is Methylthioribulose-1-phosphate dehydratase from Coccidioides posadasii (strain C735) (Valley fever fungus).